A 547-amino-acid chain; its full sequence is CTP synthase (547 aa).

The segment at Met-1–Leu-269 is amidoligase domain. Ser-14 contacts CTP. Ser-14 contacts UTP. Residues Ser-15 to Leu-20 and Asp-72 each bind ATP. Mg(2+)-binding residues include Asp-72 and Glu-143. Residues Asp-150 to Glu-152, Lys-190 to Gln-195, and Lys-226 each bind CTP. Residues Lys-190–Gln-195 and Lys-226 each bind UTP. The region spanning Thr-294–Val-547 is the Glutamine amidotransferase type-1 domain. Residue Gly-356 participates in L-glutamine binding. Catalysis depends on Cys-383, which acts as the Nucleophile; for glutamine hydrolysis. L-glutamine-binding positions include Leu-384–Gln-387, Glu-407, and Arg-475. Catalysis depends on residues His-520 and Glu-522.

The protein belongs to the CTP synthase family. Homotetramer.

The enzyme catalyses UTP + L-glutamine + ATP + H2O = CTP + L-glutamate + ADP + phosphate + 2 H(+). It catalyses the reaction L-glutamine + H2O = L-glutamate + NH4(+). It carries out the reaction UTP + NH4(+) + ATP = CTP + ADP + phosphate + 2 H(+). It functions in the pathway pyrimidine metabolism; CTP biosynthesis via de novo pathway; CTP from UDP: step 2/2. With respect to regulation, allosterically activated by GTP, when glutamine is the substrate; GTP has no effect on the reaction when ammonia is the substrate. The allosteric effector GTP functions by stabilizing the protein conformation that binds the tetrahedral intermediate(s) formed during glutamine hydrolysis. Inhibited by the product CTP, via allosteric rather than competitive inhibition. In terms of biological role, catalyzes the ATP-dependent amination of UTP to CTP with either L-glutamine or ammonia as the source of nitrogen. Regulates intracellular CTP levels through interactions with the four ribonucleotide triphosphates. This Desulfovibrio desulfuricans (strain ATCC 27774 / DSM 6949 / MB) protein is CTP synthase.